Here is a 190-residue protein sequence, read N- to C-terminus: A-type ATP synthase subunit E (190 aa).

It belongs to the V-ATPase E subunit family. In terms of assembly, has multiple subunits with at least A(3), B(3), C, D, E, F, H, I and proteolipid K(x).

Its subcellular location is the cell membrane. Functionally, component of the A-type ATP synthase that produces ATP from ADP in the presence of a proton gradient across the membrane. The sequence is that of A-type ATP synthase subunit E from Pyrobaculum neutrophilum (strain DSM 2338 / JCM 9278 / NBRC 100436 / V24Sta) (Thermoproteus neutrophilus).